A 155-amino-acid chain; its full sequence is Ribosome maturation factor RimP (155 aa).

Belongs to the RimP family.

The protein resides in the cytoplasm. Required for maturation of 30S ribosomal subunits. This Bacteroides thetaiotaomicron (strain ATCC 29148 / DSM 2079 / JCM 5827 / CCUG 10774 / NCTC 10582 / VPI-5482 / E50) protein is Ribosome maturation factor RimP.